The following is a 471-amino-acid chain: UDP-glycosyltransferase 1 (471 aa).

The active-site Proton acceptor is the His15. An anthocyanidin is bound at residue His15. Residue Asp124 is the Charge relay of the active site. Thr146, Ala348, Gln350, His365, Trp368, Asn369, Ser370, and Glu373 together coordinate UDP-alpha-D-glucose. Residue Ala388 participates in an anthocyanidin binding. The UDP-alpha-D-glucose site is built by Glu389 and Gln390.

This sequence belongs to the UDP-glycosyltransferase family. In terms of tissue distribution, expressed in roots. Detected in stems and leaves.

It catalyses the reaction a 7-hydroxyisoflavone + UDP-alpha-D-glucose = a 7-hydroxyisoflavone 7-O-beta-D-glucoside + UDP + H(+). Isoflavone 7-O-glucosyltransferase converting daidzein to daidzin, genistein to genistin and formononetin to ononin. Shows some activity toward the chalcone isoliquiritigenin, the flavanones liquiritigenin and naringenin, and the flavone apigenin, but not toward cyanidin, luteolin, kaempferol, quercetin, daidzin and puerarin. In Pueraria montana var. lobata (Kudzu vine), this protein is UDP-glycosyltransferase 1.